Consider the following 145-residue polypeptide: Bacilliredoxin Acid345_1880 (145 aa).

This sequence belongs to the bacilliredoxin family.

The polypeptide is Bacilliredoxin Acid345_1880 (Koribacter versatilis (strain Ellin345)).